We begin with the raw amino-acid sequence, 156 residues long: Small ribosomal subunit protein uS7 (156 aa).

It belongs to the universal ribosomal protein uS7 family. Part of the 30S ribosomal subunit. Contacts proteins S9 and S11.

Its function is as follows. One of the primary rRNA binding proteins, it binds directly to 16S rRNA where it nucleates assembly of the head domain of the 30S subunit. Is located at the subunit interface close to the decoding center, probably blocks exit of the E-site tRNA. The protein is Small ribosomal subunit protein uS7 of Geobacter sulfurreducens (strain ATCC 51573 / DSM 12127 / PCA).